A 273-amino-acid chain; its full sequence is HUWE1-associated protein modifying stress responses 2 (273 aa).

Disordered regions lie at residues 146 to 181 (GKVPPAPPPPRTPRTPPKPPTGVTSQAVATESSSSV), 204 to 230 (ISMRSGDSPQDSGVASSGRRKTSFLED), and 251 to 273 (KRTSAQCSDGITDSPIQKRNRMV). Residues 149–165 (PPAPPPPRTPRTPPKPP) are compositionally biased toward pro residues. 3 stretches are compositionally biased toward polar residues: residues 170-181 (SQAVATESSSSV), 208-218 (SGDSPQDSGVA), and 254-267 (SAQCSDGITDSPIQ). The tract at residues 249 to 273 (IRKRTSAQCSDGITDSPIQKRNRMV) is nuclear localization signal.

Belongs to the HAPSTR1 family. As to quaternary structure, homooligomer. Heterooligomer with HAPSTR1; the interaction is direct and stabilizes HAPSTR1 independently of HUWE1. Interacts with HUWE1. In terms of tissue distribution, expressed in a tissue-restricted manner compared to HAPSTR1.

Its subcellular location is the nucleus. In terms of biological role, together with HAPSTR1 plays a central regulatory role in the cellular response to molecular stressors, such as DNA damage, nutrient scarcity, and protein misfolding. Regulates these multiple stress response signaling pathways by stabilizing HAPSTR1, but also independently of HAPSTR1. This Homo sapiens (Human) protein is HUWE1-associated protein modifying stress responses 2.